We begin with the raw amino-acid sequence, 832 residues long: Ventricular zone-expressed PH domain-containing protein homolog 1 (832 aa).

The interval 201–319 is interaction with TGFBR1; it reads AELLALMSQL…RYLVSQLANM (119 aa). The interval 497–519 is disordered; it reads DTHGSQLRNSSASHPSIIHSEPE. The segment covering 499–510 has biased composition (polar residues); the sequence is HGSQLRNSSASH. Residues 663–832 are interaction with TGFBR1; sequence ESTFPQQKDL…RESREVTTYL (170 aa). The 103-residue stretch at 716–818 folds into the PH domain; it reads QPLIEGKLKE…WLQCINVALA (103 aa).

The protein belongs to the MELT/VEPH family. As to quaternary structure, interacts with TGFBR1.

The protein localises to the cell membrane. Its function is as follows. Interacts with TGF-beta receptor type-1 (TGFBR1) and inhibits dissociation of activated SMAD2 from TGFBR1, impeding its nuclear accumulation and resulting in impaired TGF-beta signaling. May also affect FOXO, Hippo and Wnt signaling. This Rattus norvegicus (Rat) protein is Ventricular zone-expressed PH domain-containing protein homolog 1 (Veph1).